The primary structure comprises 187 residues: Elongation factor P (187 aa).

Lys34 is subject to N6-(3,6-diaminohexanoyl)-5-hydroxylysine.

This sequence belongs to the elongation factor P family. May be beta-lysylated on the epsilon-amino group of Lys-34 by the combined action of EpmA and EpmB, and then hydroxylated on the C5 position of the same residue by EpmC (if this protein is present). Lysylation is critical for the stimulatory effect of EF-P on peptide-bond formation. The lysylation moiety may extend toward the peptidyltransferase center and stabilize the terminal 3-CCA end of the tRNA. Hydroxylation of the C5 position on Lys-34 may allow additional potential stabilizing hydrogen-bond interactions with the P-tRNA.

It localises to the cytoplasm. It participates in protein biosynthesis; polypeptide chain elongation. Involved in peptide bond synthesis. Alleviates ribosome stalling that occurs when 3 or more consecutive Pro residues or the sequence PPG is present in a protein, possibly by augmenting the peptidyl transferase activity of the ribosome. Modification of Lys-34 is required for alleviation. The chain is Elongation factor P from Vesicomyosocius okutanii subsp. Calyptogena okutanii (strain HA).